The sequence spans 98 residues: NADH-ubiquinone oxidoreductase chain 4L (98 aa).

Helical transmembrane passes span 1–21 (MSLTYMNMFMAFMISLLGLLM), 29–49 (SLLCLEGMMLSLFVMMTVIIL), and 61–81 (IILLVFAACEAALGLSLLVMV).

Belongs to the complex I subunit 4L family. As to quaternary structure, core subunit of respiratory chain NADH dehydrogenase (Complex I) which is composed of 45 different subunits.

The protein localises to the mitochondrion inner membrane. The catalysed reaction is a ubiquinone + NADH + 5 H(+)(in) = a ubiquinol + NAD(+) + 4 H(+)(out). Functionally, core subunit of the mitochondrial membrane respiratory chain NADH dehydrogenase (Complex I) which catalyzes electron transfer from NADH through the respiratory chain, using ubiquinone as an electron acceptor. Part of the enzyme membrane arm which is embedded in the lipid bilayer and involved in proton translocation. This is NADH-ubiquinone oxidoreductase chain 4L (MT-ND4L) from Uroderma bilobatum (Tent-making bat).